The following is a 152-amino-acid chain: Putative rho GDP-dissociation inhibitor 2 (152 aa).

Belongs to the Rho GDI family.

The protein localises to the cytoplasm. Regulates the GDP/GTP exchange reaction of the Rho proteins by inhibiting the dissociation of GDP from them, and the subsequent binding of GTP to them. The sequence is that of Putative rho GDP-dissociation inhibitor 2 (rdiB) from Dictyostelium discoideum (Social amoeba).